The following is a 308-amino-acid chain: Cytochrome c biogenesis protein CcsA (308 aa).

7 consecutive transmembrane segments (helical) span residues 17 to 37 (IISI…VGLC), 43 to 63 (GMIT…IYSG), 70 to 90 (LYES…VPYF), 142 to 162 (MLLS…LLVI), 213 to 233 (VIGL…VWAN), 246 to 260 (ETWA…AIYL), and 274 to 294 (AIVA…VNLL).

Belongs to the CcmF/CycK/Ccl1/NrfE/CcsA family. As to quaternary structure, may interact with Ccs1.

It localises to the plastid. The protein localises to the chloroplast thylakoid membrane. Its function is as follows. Required during biogenesis of c-type cytochromes (cytochrome c6 and cytochrome f) at the step of heme attachment. In Nymphaea alba (White water-lily), this protein is Cytochrome c biogenesis protein CcsA.